A 320-amino-acid polypeptide reads, in one-letter code: o-succinylbenzoate synthase (320 aa).

The Proton donor role is filled by Lys133. Asp161, Glu190, and Asp213 together coordinate Mg(2+). The active-site Proton acceptor is Lys235.

Belongs to the mandelate racemase/muconate lactonizing enzyme family. MenC type 1 subfamily. A divalent metal cation is required as a cofactor.

It catalyses the reaction (1R,6R)-6-hydroxy-2-succinyl-cyclohexa-2,4-diene-1-carboxylate = 2-succinylbenzoate + H2O. The protein operates within quinol/quinone metabolism; 1,4-dihydroxy-2-naphthoate biosynthesis; 1,4-dihydroxy-2-naphthoate from chorismate: step 4/7. Its pathway is quinol/quinone metabolism; menaquinone biosynthesis. Its function is as follows. Converts 2-succinyl-6-hydroxy-2,4-cyclohexadiene-1-carboxylate (SHCHC) to 2-succinylbenzoate (OSB). This is o-succinylbenzoate synthase from Escherichia coli O6:K15:H31 (strain 536 / UPEC).